Reading from the N-terminus, the 283-residue chain is Pseudokinase OPG198 (283 aa).

Residues methionine 1 and lysine 30 each contribute to the ATP site. In terms of domain architecture, Protein kinase spans 1-283 (MESFKYCFDN…DRLRRLFIQD (283 aa)).

Belongs to the protein kinase superfamily. Ser/Thr protein kinase family. Poxviruses subfamily. Interacts with B1/VPK1. Interacts with host VRK1. Interacts with host VRK2.

It is found in the host nucleus. Both catalytically active kinases B1/VPK1 and host VRK2 repress B12 inhibitory activity in a B1/VPK1 deletion mutant strain. Pseudokinase that plays a role in viral DNA replication repression by activating the antiviral protein BANF1 and inhibiting the activity of host VRK1, a cellular modulator of BANF1. In Homo sapiens (Human), this protein is Pseudokinase OPG198 (OPG198).